Consider the following 290-residue polypeptide: uncharacterized protein (290 aa).

The active-site Schiff-base intermediate with substrate is Lys-203.

Belongs to the DeoC/FbaB aldolase family.

This is an uncharacterized protein from Pasteurella multocida (strain Pm70).